The primary structure comprises 1289 residues: DNA-directed RNA polymerase subunit beta (1289 aa).

The protein belongs to the RNA polymerase beta chain family. The RNAP catalytic core consists of 2 alpha, 1 beta, 1 beta' and 1 omega subunit. When a sigma factor is associated with the core the holoenzyme is formed, which can initiate transcription.

The catalysed reaction is RNA(n) + a ribonucleoside 5'-triphosphate = RNA(n+1) + diphosphate. Functionally, DNA-dependent RNA polymerase catalyzes the transcription of DNA into RNA using the four ribonucleoside triphosphates as substrates. The sequence is that of DNA-directed RNA polymerase subunit beta from Methylacidiphilum infernorum (isolate V4) (Methylokorus infernorum (strain V4)).